The chain runs to 175 residues: ATP synthase subunit b (175 aa).

Residues 24 to 44 traverse the membrane as a helical segment; sequence LVLWQIAATVILIIVVRIFLW.

This sequence belongs to the ATPase B chain family. As to quaternary structure, F-type ATPases have 2 components, F(1) - the catalytic core - and F(0) - the membrane proton channel. F(1) has five subunits: alpha(3), beta(3), gamma(1), delta(1), epsilon(1). F(0) has three main subunits: a(1), b(2) and c(10-14). The alpha and beta chains form an alternating ring which encloses part of the gamma chain. F(1) is attached to F(0) by a central stalk formed by the gamma and epsilon chains, while a peripheral stalk is formed by the delta and b chains.

It is found in the cell membrane. In terms of biological role, f(1)F(0) ATP synthase produces ATP from ADP in the presence of a proton or sodium gradient. F-type ATPases consist of two structural domains, F(1) containing the extramembraneous catalytic core and F(0) containing the membrane proton channel, linked together by a central stalk and a peripheral stalk. During catalysis, ATP synthesis in the catalytic domain of F(1) is coupled via a rotary mechanism of the central stalk subunits to proton translocation. Functionally, component of the F(0) channel, it forms part of the peripheral stalk, linking F(1) to F(0). The protein is ATP synthase subunit b of Acholeplasma laidlawii (strain PG-8A).